The primary structure comprises 437 residues: Homogentisate 1,2-dioxygenase (437 aa).

The Proton acceptor role is filled by H295. 2 residues coordinate Fe cation: H338 and E344. Homogentisate contacts are provided by Y353 and H374. A Fe cation-binding site is contributed by H374.

The protein belongs to the homogentisate dioxygenase family. Hexamer; dimer of trimers. Fe cation is required as a cofactor.

The catalysed reaction is homogentisate + O2 = 4-maleylacetoacetate + H(+). It functions in the pathway amino-acid degradation; L-phenylalanine degradation; acetoacetate and fumarate from L-phenylalanine: step 4/6. Its function is as follows. Involved in the catabolism of homogentisate (2,5-dihydroxyphenylacetate or 2,5-OH-PhAc), a central intermediate in the degradation of phenylalanine and tyrosine. Catalyzes the oxidative ring cleavage of the aromatic ring of homogentisate to yield maleylacetoacetate. In Myxococcus xanthus (strain DK1622), this protein is Homogentisate 1,2-dioxygenase.